The sequence spans 320 residues: Ferrochelatase (320 aa).

The Fe cation site is built by histidine 194 and glutamate 275.

The protein belongs to the ferrochelatase family.

It localises to the cytoplasm. It carries out the reaction heme b + 2 H(+) = protoporphyrin IX + Fe(2+). It functions in the pathway porphyrin-containing compound metabolism; protoheme biosynthesis; protoheme from protoporphyrin-IX: step 1/1. Its function is as follows. Catalyzes the ferrous insertion into protoporphyrin IX. The protein is Ferrochelatase of Serratia proteamaculans (strain 568).